A 122-amino-acid polypeptide reads, in one-letter code: Small ribosomal subunit protein bS16 (122 aa).

The segment at 87–122 (VGKAKQAEARKAGAKNVAKQAAEAKAEETPADNTEA) is disordered.

This sequence belongs to the bacterial ribosomal protein bS16 family.

The chain is Small ribosomal subunit protein bS16 from Prochlorococcus marinus (strain MIT 9303).